The sequence spans 99 residues: Ribonuclease P protein component 1 (99 aa).

It belongs to the eukaryotic/archaeal RNase P protein component 1 family. As to quaternary structure, consists of a catalytic RNA component and at least 4-5 protein subunits.

The protein localises to the cytoplasm. The catalysed reaction is Endonucleolytic cleavage of RNA, removing 5'-extranucleotides from tRNA precursor.. In terms of biological role, part of ribonuclease P, a protein complex that generates mature tRNA molecules by cleaving their 5'-ends. This chain is Ribonuclease P protein component 1, found in Methanococcus vannielii.